Here is a 692-residue protein sequence, read N- to C-terminus: Bifunctional uridylyltransferase/uridylyl-removing enzyme (692 aa).

A uridylyltransferase region spans residues Met-1–Pro-270. The uridylyl-removing stretch occupies residues Leu-271–Ser-692. The 102-residue stretch at Ile-383–Asp-484 folds into the HD domain.

This sequence belongs to the GlnD family. Requires Mg(2+) as cofactor.

It carries out the reaction [protein-PII]-L-tyrosine + UTP = [protein-PII]-uridylyl-L-tyrosine + diphosphate. It catalyses the reaction [protein-PII]-uridylyl-L-tyrosine + H2O = [protein-PII]-L-tyrosine + UMP + H(+). With respect to regulation, uridylyltransferase (UTase) activity is inhibited by glutamine, while glutamine activates uridylyl-removing (UR) activity. Functionally, modifies, by uridylylation and deuridylylation, the PII regulatory proteins (GlnB and homologs), in response to the nitrogen status of the cell that GlnD senses through the glutamine level. Under low glutamine levels, catalyzes the conversion of the PII proteins and UTP to PII-UMP and PPi, while under higher glutamine levels, GlnD hydrolyzes PII-UMP to PII and UMP (deuridylylation). Thus, controls uridylylation state and activity of the PII proteins, and plays an important role in the regulation of nitrogen assimilation and metabolism. This Corynebacterium glutamicum (strain ATCC 13032 / DSM 20300 / JCM 1318 / BCRC 11384 / CCUG 27702 / LMG 3730 / NBRC 12168 / NCIMB 10025 / NRRL B-2784 / 534) protein is Bifunctional uridylyltransferase/uridylyl-removing enzyme (glnD).